A 469-amino-acid polypeptide reads, in one-letter code: Acetyl-CoA decarbonylase/synthase complex subunit beta 1 (469 aa).

Residues Cys189, Cys192, Cys278, and Cys280 each coordinate [Ni-Fe-S] cluster.

This sequence belongs to the CdhC family. Monomer. The ACDS complex is made up of alpha, epsilon, beta, gamma and delta chains with a probable stoichiometry of (alpha(2)epsilon(2))(4)-beta(8)-(gamma(1)delta(1))(8) (Potential). [Ni-Fe-S] cluster is required as a cofactor.

It catalyses the reaction Co(I)-[corrinoid Fe-S protein] + acetyl-CoA + H(+) = methyl-Co(III)-[corrinoid Fe-S protein] + CO + CoA. The protein operates within one-carbon metabolism; methanogenesis from acetate. Functionally, part of a complex that catalyzes the reversible cleavage of acetyl-CoA, allowing growth on acetate as sole source of carbon and energy. The alpha-epsilon complex generates CO from CO(2), while the beta subunit (this protein) combines the CO with CoA and a methyl group to form acetyl-CoA. The methyl group, which is incorporated into acetyl-CoA, is transferred to the beta subunit by a corrinoid iron-sulfur protein (the gamma-delta complex). The protein is Acetyl-CoA decarbonylase/synthase complex subunit beta 1 (cdhC1) of Methanosarcina thermophila.